Reading from the N-terminus, the 562-residue chain is Endoglucanase E1 (562 aa).

Positions Met1–Ala41 are cleaved as a signal peptide. Positions Ala42–Gly400 are catalytic. A disulfide bridge connects residues Cys75 and Cys161. Glu203 (proton donor) is an active-site residue. Cys209 and Cys212 are joined by a disulfide. Catalysis depends on Glu323, which acts as the Nucleophile. Positions Val399 to Gly462 are disordered. 2 stretches are compositionally biased toward low complexity: residues Ala401–Pro411 and Pro437–Pro449. In terms of domain architecture, CBM2 spans Thr458 to Ser562.

Belongs to the glycosyl hydrolase 5 (cellulase A) family.

The catalysed reaction is Endohydrolysis of (1-&gt;4)-beta-D-glucosidic linkages in cellulose, lichenin and cereal beta-D-glucans.. Has a very high specific activity on carboxymethylcellulose. In Acidothermus cellulolyticus (strain ATCC 43068 / DSM 8971 / 11B), this protein is Endoglucanase E1.